The primary structure comprises 731 residues: Dynein axonemal intermediate chain 7 (731 aa).

2 disordered regions span residues 1–50 (MPPK…NERL) and 285–320 (QNTE…VRSE). 2 stretches are compositionally biased toward basic and acidic residues: residues 17-50 (KAEK…NERL) and 296-320 (GKME…VRSE).

This sequence belongs to the DNAI7 family. In terms of assembly, part of the multisubunit axonemal dynein complex formed at least of two heavy chains and a number of intermediate and light chains.

The protein localises to the cell projection. Its subcellular location is the cilium. The protein resides in the cytoplasm. Via its association with the multisubunit axonemal dynein complex, may be potentially involved in the regulation of cilia function. The polypeptide is Dynein axonemal intermediate chain 7 (dnai7) (Danio rerio (Zebrafish)).